The primary structure comprises 929 residues: Isoleucine--tRNA ligase (929 aa).

The 'HIGH' region motif lies at 57–67 (PYANGNIHVGH). E554 serves as a coordination point for L-isoleucyl-5'-AMP. A 'KMSKS' region motif is present at residues 595-599 (KMSKS). An ATP-binding site is contributed by K598. Residues C888, C891, C908, and C911 each contribute to the Zn(2+) site.

This sequence belongs to the class-I aminoacyl-tRNA synthetase family. IleS type 1 subfamily. Monomer. The cofactor is Zn(2+).

The protein localises to the cytoplasm. The catalysed reaction is tRNA(Ile) + L-isoleucine + ATP = L-isoleucyl-tRNA(Ile) + AMP + diphosphate. In terms of biological role, catalyzes the attachment of isoleucine to tRNA(Ile). As IleRS can inadvertently accommodate and process structurally similar amino acids such as valine, to avoid such errors it has two additional distinct tRNA(Ile)-dependent editing activities. One activity is designated as 'pretransfer' editing and involves the hydrolysis of activated Val-AMP. The other activity is designated 'posttransfer' editing and involves deacylation of mischarged Val-tRNA(Ile). The protein is Isoleucine--tRNA ligase of Streptococcus thermophilus (strain CNRZ 1066).